Consider the following 359-residue polypeptide: Protein trichome birefringence-like 42 (359 aa).

The chain crosses the membrane as a helical; Signal-anchor for type II membrane protein span at residues 7–25; that stretch reads LFLLLLIFLVDLSDYGVLA. The GDS motif motif lies at 110 to 112; it reads GDS. The DCXHWCLPGXXDXWN motif signature appears at 335–349; sequence DCSHWCLPGVPDAWN.

This sequence belongs to the PC-esterase family. TBL subfamily.

The protein resides in the membrane. In terms of biological role, may act as a bridging protein that binds pectin and other cell wall polysaccharides. Probably involved in maintaining esterification of pectins. May be involved in the specific O-acetylation of cell wall polymers. The polypeptide is Protein trichome birefringence-like 42 (TBL42) (Arabidopsis thaliana (Mouse-ear cress)).